The following is a 307-amino-acid chain: Nicotinamide/nicotinic acid mononucleotide adenylyltransferase 2 (307 aa).

The NAD(+) site is built by serine 16 and phenylalanine 17. Histidine 24 contacts ATP. Residues tryptophan 92, threonine 95, glycine 200, aspartate 202, leucine 212, tryptophan 213, and arginine 232 each coordinate NAD(+). Residue 271 to 274 (TKSR) participates in ATP binding.

Belongs to the eukaryotic NMN adenylyltransferase family. In terms of assembly, monomer. Requires Mg(2+) as cofactor.

It localises to the golgi apparatus membrane. The protein resides in the cytoplasmic vesicle membrane. It is found in the cytoplasm. Its subcellular location is the cell projection. The protein localises to the axon. The catalysed reaction is beta-nicotinamide D-ribonucleotide + ATP + H(+) = diphosphate + NAD(+). The enzyme catalyses nicotinate beta-D-ribonucleotide + ATP + H(+) = deamido-NAD(+) + diphosphate. It participates in cofactor biosynthesis; NAD(+) biosynthesis; NAD(+) from nicotinamide D-ribonucleotide: step 1/1. It functions in the pathway cofactor biosynthesis; NAD(+) biosynthesis; deamido-NAD(+) from nicotinate D-ribonucleotide: step 1/1. Its function is as follows. Nicotinamide/nicotinate-nucleotide adenylyltransferase that acts as an axon maintenance factor. Axon survival factor required for the maintenance of healthy axons: acts by delaying Wallerian axon degeneration, an evolutionarily conserved process that drives the loss of damaged axons. Catalyzes the formation of NAD(+) from nicotinamide mononucleotide (NMN) and ATP. Can also use the deamidated form; nicotinic acid mononucleotide (NaMN) as substrate but with a lower efficiency. Also catalyzes the reverse reaction, i.e. the pyrophosphorolytic cleavage of NAD(+). For the pyrophosphorolytic activity prefers NAD(+), NADH and NaAD as substrates and degrades nicotinic acid adenine dinucleotide phosphate (NHD) less effectively. Also acts as an activator of ADP-ribosylation by supporting the catalytic activity of PARP16 and promoting mono-ADP-ribosylation of ribosomes by PARP16. May be involved in the maintenance of axonal integrity. The polypeptide is Nicotinamide/nicotinic acid mononucleotide adenylyltransferase 2 (nmnat2) (Xenopus tropicalis (Western clawed frog)).